Here is a 306-residue protein sequence, read N- to C-terminus: Type 2A encapsulin shell protein SrpI (306 aa).

This sequence belongs to the encapsulin family. Family 2A subfamily. As to quaternary structure, the 24.5 nm encapsulin nanocompartment is formed by 60 subunits; monomers form pentamers which assemble to form shells. There are 12 positively charged pores where the pentamers meet with a minimal pore diameter of 3.7 Angstroms as well 3-fold axis channels and dimer channels.

The protein resides in the encapsulin nanocompartment. In terms of biological role, shell component of a type 2A encapsulin nanocompartment. Expression in E.coli generates nanocompartments with an average diameter of 25 nm. They can be disassembled by treatment with 6M guanidine hydrochloride and reassembled with cargo. The nanocompartment is probably involved in sulfur metabolism. Probably allows passage of cysteine into its interior; during growth in light the physiological pH is 8-8.4, about 30-54% of free cysteine (charge -1) would be able to pass through the shell. The chain is Type 2A encapsulin shell protein SrpI from Synechococcus elongatus (strain ATCC 33912 / PCC 7942 / FACHB-805) (Anacystis nidulans R2).